Here is a 153-residue protein sequence, read N- to C-terminus: Cytochrome c-type biogenesis protein CcmE (153 aa).

Residues 1–7 (MKPRHKR) are Cytoplasmic-facing. Residues 8-28 (LAIAGGVLVAVGAIATLVLNA) traverse the membrane as a helical; Signal-anchor for type II membrane protein segment. Residues 29–153 (FQSNLVFFYS…SSQAATGDPR (125 aa)) lie on the Periplasmic side of the membrane. Heme is bound by residues His120 and Tyr124. A disordered region spans residues 130–153 (AEALKRAKEGGQMQSSQAATGDPR). Positions 141–153 (QMQSSQAATGDPR) are enriched in polar residues.

Belongs to the CcmE/CycJ family.

The protein resides in the cell inner membrane. In terms of biological role, heme chaperone required for the biogenesis of c-type cytochromes. Transiently binds heme delivered by CcmC and transfers the heme to apo-cytochromes in a process facilitated by CcmF and CcmH. This Leptothrix cholodnii (strain ATCC 51168 / LMG 8142 / SP-6) (Leptothrix discophora (strain SP-6)) protein is Cytochrome c-type biogenesis protein CcmE.